A 217-amino-acid polypeptide reads, in one-letter code: Adenylate kinase (217 aa).

10–15 (GAGKGT) contributes to the ATP binding site. Positions 30-59 (STGDMLRAAVKAGTPLGLEAKKVMDSGGLV) are NMP. Residues T31, R36, 57–59 (GLV), 85–88 (GFPR), and Q92 contribute to the AMP site. The segment at 122–159 (GRRVHVASGRTYHVKFNPPKVAGVDDVTGEPLIQRDDD) is LID. Residues R123 and 132–133 (TY) contribute to the ATP site. 2 residues coordinate AMP: R156 and R167. G203 contributes to the ATP binding site.

This sequence belongs to the adenylate kinase family. As to quaternary structure, monomer.

Its subcellular location is the cytoplasm. The enzyme catalyses AMP + ATP = 2 ADP. It functions in the pathway purine metabolism; AMP biosynthesis via salvage pathway; AMP from ADP: step 1/1. Functionally, catalyzes the reversible transfer of the terminal phosphate group between ATP and AMP. Plays an important role in cellular energy homeostasis and in adenine nucleotide metabolism. This chain is Adenylate kinase, found in Methylibium petroleiphilum (strain ATCC BAA-1232 / LMG 22953 / PM1).